Reading from the N-terminus, the 155-residue chain is Putative pre-16S rRNA nuclease (155 aa).

This sequence belongs to the YqgF nuclease family.

The protein localises to the cytoplasm. In terms of biological role, could be a nuclease involved in processing of the 5'-end of pre-16S rRNA. The polypeptide is Putative pre-16S rRNA nuclease (Xanthomonas euvesicatoria pv. vesicatoria (strain 85-10) (Xanthomonas campestris pv. vesicatoria)).